We begin with the raw amino-acid sequence, 414 residues long: 26S proteasome regulatory subunit 8 homolog (414 aa).

197–204 (GPPGTGKT) contacts ATP.

The protein belongs to the AAA ATPase family.

It is found in the cytoplasm. It localises to the nucleus. Functionally, the 26S proteasome is involved in the ATP-dependent degradation of ubiquitinated proteins. The regulatory (or ATPase) complex confers ATP dependency and substrate specificity to the 26S complex. This chain is 26S proteasome regulatory subunit 8 homolog, found in Naegleria fowleri (Brain eating amoeba).